The following is a 430-amino-acid chain: Enolase (430 aa).

Gln-167 is a binding site for (2R)-2-phosphoglycerate. Glu-209 functions as the Proton donor in the catalytic mechanism. Mg(2+)-binding residues include Asp-246, Glu-289, and Asp-316. Positions 341, 370, 371, and 392 each coordinate (2R)-2-phosphoglycerate. Lys-341 functions as the Proton acceptor in the catalytic mechanism.

Belongs to the enolase family. Component of the RNA degradosome, a multiprotein complex involved in RNA processing and mRNA degradation. It depends on Mg(2+) as a cofactor.

The protein localises to the cytoplasm. The protein resides in the secreted. It localises to the cell surface. It catalyses the reaction (2R)-2-phosphoglycerate = phosphoenolpyruvate + H2O. Its pathway is carbohydrate degradation; glycolysis; pyruvate from D-glyceraldehyde 3-phosphate: step 4/5. Its function is as follows. Catalyzes the reversible conversion of 2-phosphoglycerate (2-PG) into phosphoenolpyruvate (PEP). It is essential for the degradation of carbohydrates via glycolysis. This is Enolase from Alteromonas mediterranea (strain DSM 17117 / CIP 110805 / LMG 28347 / Deep ecotype).